The chain runs to 449 residues: Naphthalene 1,2-dioxygenase system, large oxygenase component (449 aa).

One can recognise a Rieske domain in the interval 39 to 137; it reads WLFLTHDSLI…LNKKCLGLKE (99 aa). Residues C81, H83, C101, and H104 each coordinate [2Fe-2S] cluster. Fe cation contacts are provided by H208, H213, and D362.

Belongs to the bacterial ring-hydroxylating dioxygenase alpha subunit family. In terms of assembly, the naphthalene dioxygenase (NDO) multicomponent enzyme system is composed of an electron transfer component and a dioxygenase component (iron sulfur protein (ISP)). The electron transfer component is composed of a ferredoxin reductase (NdoR) and a ferredoxin (NdoA), and the dioxygenase component is formed of a heterohexamer (trimer of heterodimers) of three large alpha subunits (NdoB) and three small beta subunits (NdoC). [2Fe-2S] cluster serves as cofactor. It depends on Fe(2+) as a cofactor.

The enzyme catalyses naphthalene + NADH + O2 + H(+) = (1R,2S)-1,2-dihydronaphthalene-1,2-diol + NAD(+). It functions in the pathway aromatic compound metabolism; naphthalene degradation. Its function is as follows. Component of the naphthalene dioxygenase (NDO) multicomponent enzyme system which catalyzes the incorporation of both atoms of molecular oxygen into naphthalene to form cis-(1R,2S)-dihydroxy-1,2-dihydronaphthalene. The alpha subunit has a catalytic role in the holoenzyme. This Pseudomonas fluorescens protein is Naphthalene 1,2-dioxygenase system, large oxygenase component.